A 526-amino-acid polypeptide reads, in one-letter code: MQSESGIVPDFEVGEEFHEEPKTYYELKSQPLKSSSSAEHPGASKPPISSSSMTSRILLRQQLMREQMQEQERREQQQKLQAAQFMQQRVPVSQTPAINVSVPTTLPSATQVPMEVLKVQTHLENPTKYHIQQAQRQQVKQYLSTTLANKHANQVLSLPCPNQPGDHVMPPVPGSSAPNSPMAMLTLNSNCEKEGFYKFEEQNRAESECPGMNTHSRASCMQMDDVIDDIISLESSYNEEILGLMDPALQMANTLPVSGNLIDLYGNQGLPPPGLTISNSCPANLPNIKRELTACIFPTESEARALAKERQKKDNHNLIERRRRFNINDRIKELGTLIPKSNDPDMRWNKGTILKASVDYIRKLQREQQRAKELENRQKKLEHANRHLLLRIQELEMQARAHGLSLIPSTGLCSPDLVNRIIKQEPVLENCSQDLLQHHADLTCTTTLDLTDGTITFNNNLGTGTEANQAYSVPTKMGSKLEDILMDDTLSPVGVTDPLLSSVSPGASKTSSRRSSMSMEETEHTC.

The interval 1 to 54 is disordered; the sequence is MQSESGIVPDFEVGEEFHEEPKTYYELKSQPLKSSSSAEHPGASKPPISSSSMT. Ser5 is modified (phosphoserine; by MTOR). Residues 15-25 show a composition bias toward basic and acidic residues; that stretch reads EEFHEEPKTYY. A compositionally biased stretch (low complexity) spans 41–54; that stretch reads PGASKPPISSSSMT. Ser180 carries the phosphoserine; by MAPK modification. A transactivation region spans residues 224 to 295; that stretch reads DDVIDDIISL…PNIKRELTAC (72 aa). Ser280 carries the post-translational modification Phosphoserine; by MARK3. Lys289 is covalently cross-linked (Glycyl lysine isopeptide (Lys-Gly) (interchain with G-Cter in SUMO)). Positions 311-364 constitute a bHLH domain; it reads QKKDNHNLIERRRRFNINDRIKELGTLIPKSNDPDMRWNKGTILKASVDYIRKL. A coiled-coil region spans residues 355 to 402; it reads KASVDYIRKLQREQQRAKELENRQKKLEHANRHLLLRIQELEMQARAH. The tract at residues 374–395 is leucine-zipper; the sequence is LENRQKKLEHANRHLLLRIQEL. Residues 401–431 are DNA-binding regulation; it reads AHGLSLIPSTGLCSPDLVNRIIKQEPVLENC. Ser405 is modified (phosphoserine; by GSK3). Ser414 carries the phosphoserine modification. Residue Lys423 forms a Glycyl lysine isopeptide (Lys-Gly) (interchain with G-Cter in SUMO) linkage. Ser491 carries the post-translational modification Phosphoserine. The disordered stretch occupies residues 496-526; the sequence is TDPLLSSVSPGASKTSSRRSSMSMEETEHTC. The segment covering 499–509 has biased composition (polar residues); it reads LLSSVSPGASK. The residue at position 516 (Ser516) is a Phosphoserine; by RPS6KA1.

The protein belongs to the MiT/TFE family. Homodimer or heterodimer; dimerization is mediated via the coiled coil region. Efficient DNA binding requires dimerization with another bHLH protein. Binds DNA in the form of homodimer or heterodimer with either TFE3, TFEB or TFEC. Interacts with small GTPases Rag (RagA/RRAGA, RagB/RRAGB, RagC/RRAGC and/or RagD/RRAGD); promoting its recruitment to lysosomal membrane in the presence of nutrients. Interacts with KARS1. Identified in a complex with HINT1 and CTNNB1. Interacts with VSX2. When nutrients are present, phosphorylation by MTOR at Ser-5 via non-canonical mTORC1 pathway promotes ubiquitination by the SCF(BTRC) complex, followed by degradation. Phosphorylation at Ser-405 significantly enhances the ability to bind the tyrosinase promoter. Phosphorylation by MARK3/cTAK1 at Ser-280 promotes association with 14-3-3/YWHA adapters and retention in the cytosol. Phosphorylated at Ser-180 and Ser-516 following KIT signaling, triggering a short live activation: Phosphorylation at Ser-180 and Ser-516 by MAPK and RPS6KA1, respectively, activate the transcription factor activity but also promote ubiquitination and subsequent degradation by the proteasome. Phosphorylated in response to blue light (415nm). Post-translationally, ubiquitinated by the SCF(BTRC) and SCF(FBXW11) complexes following phosphorylation ar Ser-5 by MTOR, leading to its degradation by the proteasome. Ubiquitinated following phosphorylation at Ser-180, leading to subsequent degradation by the proteasome. Deubiquitinated by USP13, preventing its degradation. In terms of tissue distribution, expressed in melanocytes (at protein level). As to expression, expressed in the retinal pigment epithelium, brain, and placenta. Expressed in the kidney. Expressed in the kidney and retinal pigment epithelium. In terms of tissue distribution, expressed in the kidney. As to expression, expressed in melanocytes.

Its subcellular location is the nucleus. It localises to the cytoplasm. The protein resides in the lysosome membrane. Functionally, transcription factor that acts as a master regulator of melanocyte survival and differentiation as well as melanosome biogenesis. Binds to M-boxes (5'-TCATGTG-3') and symmetrical DNA sequences (E-boxes) (5'-CACGTG-3') found in the promoter of pigmentation genes, such as tyrosinase (TYR). Involved in the cellular response to amino acid availability by acting downstream of MTOR: in the presence of nutrients, MITF phosphorylation by MTOR promotes its inactivation. Upon starvation or lysosomal stress, inhibition of MTOR induces MITF dephosphorylation, resulting in transcription factor activity. Plays an important role in melanocyte development by regulating the expression of tyrosinase (TYR) and tyrosinase-related protein 1 (TYRP1). Plays a critical role in the differentiation of various cell types, such as neural crest-derived melanocytes, mast cells, osteoclasts and optic cup-derived retinal pigment epithelium. This Homo sapiens (Human) protein is Microphthalmia-associated transcription factor.